The primary structure comprises 84 residues: Dolichol phosphate-mannose biosynthesis regulatory protein (84 aa).

2 helical membrane passes run 11–31 and 49–69; these read LGLVAVSLIIFTYYTAWVILL and YAVAIPLAAGLLLLLFVGLFI.

The protein belongs to the DPM2 family. In terms of assembly, component of the dolichol-phosphate mannose (DPM) synthase complex composed of DPM1, DPM2 and DPM3; in the complex interacts directly with DPM3. Component of the glycosylphosphatidylinositol-N-acetylglucosaminyltransferase (GPI-GnT) complex composed at least by PIGA, PIGC, PIGH, PIGP, PIGQ, PIGY and DPM2. Interacts with PIGA, PIGC and PIGQ.

The protein resides in the endoplasmic reticulum membrane. It functions in the pathway protein modification; protein glycosylation. In terms of biological role, regulates the biosynthesis of dolichol phosphate-mannose. Regulatory subunit of the dolichol-phosphate mannose (DPM) synthase complex; essential for the ER localization and stable expression of DPM1. Part of the glycosylphosphatidylinositol-N-acetylglucosaminyltransferase (GPI-GnT) complex that catalyzes the transfer of N-acetylglucosamine from UDP-N-acetylglucosamine to phosphatidylinositol and participates in the first step of GPI biosynthesis. May act by regulating the GPI-GNT complex. This is Dolichol phosphate-mannose biosynthesis regulatory protein from Homo sapiens (Human).